We begin with the raw amino-acid sequence, 277 residues long: Large ribosomal subunit protein uL2 (277 aa).

The disordered stretch occupies residues 219–277 (TVRGSVMNPNDHPHGGGEGRAPIGRKSPMSPWGKPTLGFKTRKKKNKSDKFIVRRRKNK). The segment covering 258–277 (KTRKKKNKSDKFIVRRRKNK) has biased composition (basic residues).

Belongs to the universal ribosomal protein uL2 family. As to quaternary structure, part of the 50S ribosomal subunit. Forms a bridge to the 30S subunit in the 70S ribosome.

Functionally, one of the primary rRNA binding proteins. Required for association of the 30S and 50S subunits to form the 70S ribosome, for tRNA binding and peptide bond formation. It has been suggested to have peptidyltransferase activity; this is somewhat controversial. Makes several contacts with the 16S rRNA in the 70S ribosome. The polypeptide is Large ribosomal subunit protein uL2 (Bacillus subtilis (strain 168)).